The primary structure comprises 290 residues: uncharacterized protein (290 aa).

The segment at 153-178 is disordered; sequence EMVPITTSSTTPRSKGDEATSTGAFP. The segment covering 157–178 has biased composition (polar residues); the sequence is ITTSSTTPRSKGDEATSTGAFP. Residues 202-222 form a helical membrane-spanning segment; the sequence is LIAVTLLLGGAAIIVFVIFEV. The tract at residues 246–276 is disordered; the sequence is KEEDQKPGTTESQLDSQPEKVKHNVPNSSDS. Polar residues predominate over residues 252–261; sequence PGTTESQLDS.

It is found in the membrane. This is an uncharacterized protein from Mus musculus (Mouse).